Consider the following 546-residue polypeptide: Probable T-complex protein 1 subunit theta (546 aa).

The interval 527-546 (MSKPAGGPKPPGPNPHWDDD) is disordered.

This sequence belongs to the TCP-1 chaperonin family. In terms of assembly, heterooligomeric complex of about 850 to 900 kDa that forms two stacked rings, 12 to 16 nm in diameter.

The protein localises to the cytoplasm. In terms of biological role, molecular chaperone; assists the folding of proteins upon ATP hydrolysis. Known to play a role, in vitro, in the folding of actin and tubulin. The polypeptide is Probable T-complex protein 1 subunit theta (cct8) (Schizosaccharomyces pombe (strain 972 / ATCC 24843) (Fission yeast)).